A 491-amino-acid chain; its full sequence is Protein SET DOMAIN GROUP 40 (491 aa).

Residues 36 to 278 (HSLSVSDFPD…LGEQVLLCYG (243 aa)) form the SET domain.

Belongs to the class V-like SAM-binding methyltransferase superfamily.

The chain is Protein SET DOMAIN GROUP 40 (SDG40) from Arabidopsis thaliana (Mouse-ear cress).